Consider the following 445-residue polypeptide: Glycine betaine monooxygenase oxygenase subunit (445 aa).

The Rieske domain occupies 73 to 180; that stretch reads WLFVGMTCEI…VTHAGGFLFV (108 aa). Residues C115, H117, C135, and H138 each coordinate [2Fe-2S] cluster. Fe cation contacts are provided by H234 and H239.

Belongs to the bacterial ring-hydroxylating dioxygenase alpha subunit family. Homotrimer. The system is composed of an oxygenase subunit (BmoA) and a reductase subunit (BmoB). Maximal specific activity is obtained when the ratio of BmoA to BmoB is 5:1. [2Fe-2S] cluster is required as a cofactor. Fe cation serves as cofactor.

The catalysed reaction is glycine betaine + NADH + O2 + H(+) = N,N-dimethylglycine + formaldehyde + NAD(+) + H2O. Activity is absolutely dependent on the presence of BmoB. Glycine betaine monooxygenase activity is significantly enhanced by Fe(2+) and severely inhibited by heavy-metal ions, including Co(2+), Mn(2+), Zn(2+), Cu(2+) and Ag(+). Severely inhibited by EDTA. Involved in degradation of glycine betaine. Part of a Rieske-type oxygenase system that catalyzes the conversion of glycine betaine (GB) to dimethylglycine (DMG). This subunit is the terminal oxygenase component of the system. Is specific for GB, and does not show any activity on choline, L-carnitine, stachydrine, dimethylglycine or sarcosine. Activity is strictly dependent on NADH. The sequence is that of Glycine betaine monooxygenase oxygenase subunit from Chromohalobacter salexigens (strain ATCC BAA-138 / DSM 3043 / CIP 106854 / NCIMB 13768 / 1H11).